Reading from the N-terminus, the 500-residue chain is MKKYIVALDQGTTSSRAIIFDKEQNIIGVSQKEFNQIYPREGWVEHDPMEIWATQYSVLQEVMAKCNITQENIAAIGITNQRETTIVWDKNTGVPIYNAIVWQCRRTADICDELKERDGLVDYIRENTGLVLDAYFSGTKIKWILDNVEGAREKAEKGELLFGTVDSWLVWKLTNGKVHVTDYTNASRTMIFNIKNLQWDERMLKELDIPRSMLPEVKNSSEIYGYANLGAKGGIRVPIAGIAGDQQAALFGQAAFNKGDVKNTYGTGCFLLMNTGEELVKSKSGLLTTIAIGLHGKVQYALEGSVFVGGAVIQWLRDELRIISDSSDTEYFATKVEDNGGVYVVPAFVGLGAPYWDMYARGTIVGLTRGTNRNHIIRAALESIAYQTRDVLEAMINDVGYDINCIKVDGGASRNNFLMQFQSDLVGKKVIKPIITETTALGAAYLAGLAVGYWSDKEEIAKLWFASEEFEPTISEERRNKYHKKWKKAVERSKGWALED.

Thr12 is a binding site for ADP. 3 residues coordinate ATP: Thr12, Thr13, and Ser14. Thr12 provides a ligand contact to sn-glycerol 3-phosphate. Residue Arg16 coordinates ADP. The sn-glycerol 3-phosphate site is built by Arg82, Glu83, Tyr135, and Asp245. Positions 82, 83, 135, 245, and 246 each coordinate glycerol. ADP-binding residues include Thr267 and Gly310. Thr267, Gly310, Gln314, and Gly411 together coordinate ATP. ADP-binding residues include Gly411 and Asn415.

Belongs to the FGGY kinase family. In terms of assembly, homotetramer and homodimer (in equilibrium).

It carries out the reaction glycerol + ATP = sn-glycerol 3-phosphate + ADP + H(+). It participates in polyol metabolism; glycerol degradation via glycerol kinase pathway; sn-glycerol 3-phosphate from glycerol: step 1/1. Activated by phosphorylation and inhibited by fructose 1,6-bisphosphate (FBP). Functionally, key enzyme in the regulation of glycerol uptake and metabolism. Catalyzes the phosphorylation of glycerol to yield sn-glycerol 3-phosphate. The protein is Glycerol kinase of Clostridium perfringens (strain 13 / Type A).